The chain runs to 574 residues: Phosphatidylinositol 4-kinase gamma 3 (574 aa).

Ubiquitin-like domains lie at 32–109 (PILV…SDLQ) and 110–188 (AISV…AKVR). Residues 257–555 (GNGPIRSSDG…IVPTETTEDE (299 aa)) enclose the PI3K/PI4K catalytic domain. The interval 263–269 (SSDGSGG) is G-loop. ATP is bound by residues 264 to 270 (SDGSGGA), Lys286, and 381 to 384 (QMFV). The interval 414–422 (ANADRHAGN) is catalytic loop. Residues 438–464 (PIDHGYCFPNKFEDCTFEWLYWPQAKE) are activation loop. Asp440 is an ATP binding site.

Belongs to the PI3/PI4-kinase family. Type II PI4K subfamily.

It carries out the reaction a 1,2-diacyl-sn-glycero-3-phospho-(1D-myo-inositol) + ATP = a 1,2-diacyl-sn-glycero-3-phospho-(1D-myo-inositol 4-phosphate) + ADP + H(+). Its function is as follows. The phosphorylation of phosphatidylinositol (PI) to PI4P is the first committed step in the generation of phosphatidylinositol 4,5-bisphosphate (PIP2), a precursor of the second messenger inositol 1,4,5-trisphosphate (InsP3). In Arabidopsis thaliana (Mouse-ear cress), this protein is Phosphatidylinositol 4-kinase gamma 3 (PI4KG3).